The chain runs to 825 residues: NT-3 growth factor receptor (825 aa).

The N-terminal stretch at 1–31 is a signal peptide; sequence MDVSLCPAKCSFWRIFLLGSVWLDYVGSVLA. Cystine bridges form between Cys32/Cys38 and Cys36/Cys45. Residues 32–429 lie on the Extracellular side of the membrane; the sequence is CPANCVCSKT…TVTHKPEEDT (398 aa). N-linked (GlcNAc...) asparagine glycans are attached at residues Asn68, Asn72, and Asn79. 2 LRR repeats span residues 104-125 and 128-149; these read GLQKLTIKNSGLRSIQPRAFAK and HLRYINLSSNRLTTLSWQLFQT. N-linked (GlcNAc...) asparagine glycans are attached at residues Asn133 and Asn163. Residues 160-209 form the LRRCT domain; that stretch reads NFFNCSCDIRWMQLWQEQGEARLNSQNLYCINADGSQLPLFRMNISQCDL. 2 cysteine pairs are disulfide-bonded: Cys164–Cys189 and Cys166–Cys207. N-linked (GlcNAc...) asparagine glycosylation is found at Asn203, Asn218, Asn232, Asn259, Asn267, Asn272, and Asn294. 2 consecutive Ig-like C2-type domains span residues 210–300 and 309–382; these read PEIS…VALT and SLEE…IAKN. Cys231 and Cys284 form a disulfide bridge. An intrachain disulfide couples Cys320 to Cys362. N-linked (GlcNAc...) asparagine glycosylation is found at Asn375 and Asn388. The helical transmembrane segment at 430–453 threads the bilayer; sequence FGVSIAVGLAAFACVLLVVLFIMI. Residues 454-825 are Cytoplasmic-facing; the sequence is NKYGRRSKFG…ATPIYLDILG (372 aa). Residue Ser493 is modified to Phosphoserine. Tyr516 is subject to Phosphotyrosine; by autocatalysis. Residues 538-825 form the Protein kinase domain; sequence IVLKRELGEG…ATPIYLDILG (288 aa). ATP contacts are provided by residues 544 to 552 and Lys572; that span reads LGEGAFGKV. Asp679 serves as the catalytic Proton acceptor. Phosphotyrosine; by autocatalysis occurs at positions 705, 709, and 710.

The protein belongs to the protein kinase superfamily. Tyr protein kinase family. Insulin receptor subfamily. Exists in a dynamic equilibrium between monomeric (low affinity) and dimeric (high affinity) structures. Binds SH2B2. Interacts with SQSTM1 and KIDINS220. Interacts with PTPRS. Interacts with MAPK8IP3/JIP3. Ligand-mediated auto-phosphorylation.

The protein localises to the membrane. The catalysed reaction is L-tyrosyl-[protein] + ATP = O-phospho-L-tyrosyl-[protein] + ADP + H(+). Receptor tyrosine kinase involved in nervous system and probably heart development. Upon binding of its ligand NTF3/neurotrophin-3, NTRK3 autophosphorylates and activates different signaling pathways, including the phosphatidylinositol 3-kinase/AKT and the MAPK pathways, that control cell survival and differentiation. This chain is NT-3 growth factor receptor (NTRK3), found in Saimiri boliviensis boliviensis (Bolivian squirrel monkey).